We begin with the raw amino-acid sequence, 141 residues long: Large ribosomal subunit protein bL17 (141 aa).

This sequence belongs to the bacterial ribosomal protein bL17 family. As to quaternary structure, part of the 50S ribosomal subunit. Contacts protein L32.

This chain is Large ribosomal subunit protein bL17, found in Sinorhizobium fredii (strain NBRC 101917 / NGR234).